Reading from the N-terminus, the 140-residue chain is MALERTFSIIKPDATRRNLTGKINAKFEEAGLRIVAQKRIHMTKEQAGVFYGVHAERPFYDELCEFMSSAPVVVQVLEGENAIAKNREVMGATNPADAAPGTIRAEFAESVGENSVHGSDAPETAAVEIAYFFSGIELVG.

6 residues coordinate ATP: K11, F59, R87, T93, R104, and N114. The active-site Pros-phosphohistidine intermediate is H117.

The protein belongs to the NDK family. In terms of assembly, homotetramer. Mg(2+) is required as a cofactor.

It is found in the cytoplasm. The enzyme catalyses a 2'-deoxyribonucleoside 5'-diphosphate + ATP = a 2'-deoxyribonucleoside 5'-triphosphate + ADP. It catalyses the reaction a ribonucleoside 5'-diphosphate + ATP = a ribonucleoside 5'-triphosphate + ADP. Its function is as follows. Major role in the synthesis of nucleoside triphosphates other than ATP. The ATP gamma phosphate is transferred to the NDP beta phosphate via a ping-pong mechanism, using a phosphorylated active-site intermediate. The sequence is that of Nucleoside diphosphate kinase from Ruegeria pomeroyi (strain ATCC 700808 / DSM 15171 / DSS-3) (Silicibacter pomeroyi).